Here is a 448-residue protein sequence, read N- to C-terminus: High mobility group B protein 15 (448 aa).

One can recognise an ARID domain in the interval 29–120 (VADPRLFMTS…LLNNYEQIYF (92 aa)). Polar residues predominate over residues 219–236 (PQQSHGVLPNTLNISANP). Disordered stretches follow at residues 219–270 (PQQS…RSGY), 333–352 (KKNG…LPEQ), and 366–448 (VEED…AEQN). The segment covering 244 to 255 (TKRRRRRKKSEI) has biased composition (basic residues). Positions 263–330 (PKPNRSGYNF…RYRTEMEDYR (68 aa)) form a DNA-binding region, HMG box. The segment covering 389-398 (SIETDPELEE) has biased composition (acidic residues). Residues 399-412 (PSLNPSGPNLNPNP) show a composition bias toward low complexity.

The protein belongs to the HMGB family.

Its subcellular location is the nucleus. Functionally, binds preferentially DNA with A/T-rich content. In Arabidopsis thaliana (Mouse-ear cress), this protein is High mobility group B protein 15 (HMGB15).